The sequence spans 528 residues: Transcription factor cghF (528 aa).

Residues T232–A283 are disordered. The segment covering T238–P249 has biased composition (low complexity). Polar residues predominate over residues P261–A276.

It is found in the nucleus. Its function is as follows. Transcription factor that regulates the expression of the gene cluster that mediates the biosynthesis of the tetramic acid Sch210972, a potential anti-HIV fungal natural product that contains a decalin core. The sequence is that of Transcription factor cghF from Chaetomium globosum (strain ATCC 6205 / CBS 148.51 / DSM 1962 / NBRC 6347 / NRRL 1970) (Soil fungus).